The sequence spans 189 residues: Probable nicotinate-nucleotide adenylyltransferase (189 aa).

The protein belongs to the NadD family.

The catalysed reaction is nicotinate beta-D-ribonucleotide + ATP + H(+) = deamido-NAD(+) + diphosphate. It functions in the pathway cofactor biosynthesis; NAD(+) biosynthesis; deamido-NAD(+) from nicotinate D-ribonucleotide: step 1/1. Its function is as follows. Catalyzes the reversible adenylation of nicotinate mononucleotide (NaMN) to nicotinic acid adenine dinucleotide (NaAD). The polypeptide is Probable nicotinate-nucleotide adenylyltransferase (Staphylococcus aureus (strain N315)).